The primary structure comprises 577 residues: Arginine--tRNA ligase (577 aa).

The 'HIGH' region motif lies at 122–132 (PNVAKEMHVGH).

The protein belongs to the class-I aminoacyl-tRNA synthetase family. Monomer.

It localises to the cytoplasm. The enzyme catalyses tRNA(Arg) + L-arginine + ATP = L-arginyl-tRNA(Arg) + AMP + diphosphate. This is Arginine--tRNA ligase from Escherichia coli O8 (strain IAI1).